The primary structure comprises 193 residues: Corrinoid adenosyltransferase (193 aa).

Residues 5-13 (TKTGDKGQT), K22, 130-135 (RRAERR), and N154 contribute to the ATP site.

This sequence belongs to the Cob(I)alamin adenosyltransferase family. As to quaternary structure, homotrimer.

The protein localises to the cytoplasm. The catalysed reaction is 2 cob(II)yrinate a,c diamide + reduced [electron-transfer flavoprotein] + 2 ATP = 2 adenosylcob(III)yrinate a,c-diamide + 2 triphosphate + oxidized [electron-transfer flavoprotein] + 3 H(+). It catalyses the reaction 2 cob(II)alamin + reduced [electron-transfer flavoprotein] + 2 ATP = 2 adenosylcob(III)alamin + 2 triphosphate + oxidized [electron-transfer flavoprotein] + 3 H(+). It participates in cofactor biosynthesis; adenosylcobalamin biosynthesis; adenosylcobalamin from cob(II)yrinate a,c-diamide: step 2/7. This is Corrinoid adenosyltransferase (yvqK) from Bacillus subtilis (strain 168).